The chain runs to 857 residues: DNA mismatch repair protein MutS (857 aa).

608–615 (GPNMSGKS) contacts ATP.

This sequence belongs to the DNA mismatch repair MutS family.

Functionally, this protein is involved in the repair of mismatches in DNA. It is possible that it carries out the mismatch recognition step. This protein has a weak ATPase activity. The sequence is that of DNA mismatch repair protein MutS from Lacticaseibacillus casei (strain BL23) (Lactobacillus casei).